A 445-amino-acid chain; its full sequence is Probable fructoselysine/psicoselysine transporter FrlA (445 aa).

12 consecutive transmembrane segments (helical) span residues 10-30 (LGFWAVLAIAVGTTVGSGIFV), 38-58 (AAGTPWLTVLAFVIGGLIVIP), 93-113 (GWASFWANDAPSLSIMALAIV), 121-141 (PIDPLLGKFIAAGLIIAFMLL), 155-175 (LITIAKIIPFTIVIGLGIFWF), 181-201 (AAPTTTAIGATGSFMALLAGI), 236-256 (CLLVLVLYTLLALVISGLMPF), 273-293 (IPALGSTAGIFVAITAMIVIL), 334-354 (IILQGALGIFFIFVSDLTSLL), 355-375 (GYFTLVMCFKNTLTFGSIIWC), 389-410 (AFGLMTTLAIASSLILVASTFV), and 417-435 (LICAVIVIATGLPAYAFWA).

It belongs to the amino acid-polyamine-organocation (APC) superfamily.

It is found in the cell inner membrane. The enzyme catalyses N(6)-(D-fructosyl)-L-lysine(in) = N(6)-(D-fructosyl)-L-lysine(out). The catalysed reaction is N(6)-(D-psicosyl)-L-lysine(in) = N(6)-(D-psicosyl)-L-lysine(out). It functions in the pathway carbohydrate metabolism; fructoselysine degradation. Functionally, is likely involved in the transport of fructoselysine and psicoselysine to the cytoplasm, where they are degraded. The sequence is that of Probable fructoselysine/psicoselysine transporter FrlA from Escherichia coli (strain K12).